A 225-amino-acid chain; its full sequence is Phosphoserine phosphatase (225 aa).

Position 1 is an N-acetylmethionine (M1). Residue D20 is the Nucleophile of the active site. D20 and D22 together coordinate Mg(2+). An L-serine-binding site is contributed by 20–22; it reads DVD. The Proton donor role is filled by D22. Residue M52 coordinates O-phospho-L-serine. G53 provides a ligand contact to phosphate. L-serine is bound by residues 109–111 and K158; that span reads SGG. Residues 109 to 111 and K158 each bind O-phospho-L-serine; that span reads SGG. D179 serves as a coordination point for Mg(2+). T182 contacts O-phospho-L-serine. T182 is a binding site for phosphate.

Belongs to the HAD-like hydrolase superfamily. SerB family. In terms of assembly, homodimer. It depends on Mg(2+) as a cofactor.

It localises to the cytoplasm. It is found in the cytosol. The enzyme catalyses O-phospho-L-serine + H2O = L-serine + phosphate. It catalyses the reaction O-phospho-D-serine + H2O = D-serine + phosphate. The protein operates within amino-acid biosynthesis; L-serine biosynthesis; L-serine from 3-phospho-D-glycerate: step 3/3. Inhibited by calcium ions. In terms of biological role, catalyzes the last irreversible step in the biosynthesis of L-serine from carbohydrates, the dephosphorylation of O-phospho-L-serine to L-serine. L-serine can then be used in protein synthesis, to produce other amino acids, in nucleotide metabolism or in glutathione synthesis, or can be racemized to D-serine, a neuromodulator. May also act on O-phospho-D-serine. The sequence is that of Phosphoserine phosphatase from Homo sapiens (Human).